The primary structure comprises 92 residues: Beta-2-microglobulin (92 aa).

An Ig-like C1-type domain is found at 2-91 (PQIQVYTRHP…VSMKEPKTVN (90 aa)). Residues cysteine 22 and cysteine 77 are joined by a disulfide bond.

This sequence belongs to the beta-2-microglobulin family. Heterodimer of an alpha chain and a beta chain. Beta-2-microglobulin is the beta-chain of major histocompatibility complex class I molecules.

The protein localises to the secreted. Its function is as follows. Component of the class I major histocompatibility complex (MHC). Involved in the presentation of peptide antigens to the immune system. The polypeptide is Beta-2-microglobulin (B2m) (Mus caroli (Ryukyu mouse)).